The following is an 840-amino-acid chain: Heat shock 70 kDa protein 4 (840 aa).

Position 53 is an N6-acetyllysine (lysine 53). Serine 76 is subject to Phosphoserine. A phosphotyrosine mark is found at tyrosine 89 and tyrosine 336. Phosphoserine is present on residues serine 393 and serine 415. Lysine 430 bears the N6-acetyllysine mark. The tract at residues 500 to 575 (VHKSEENEEP…QAKKAKVKTS (76 aa)) is disordered. Positions 514–533 (QNAKEEEKMQVDQEEPHVEE) are enriched in basic and acidic residues. Threonine 538 carries the post-translational modification Phosphothreonine. Phosphoserine is present on residues serine 546 and serine 647. At tyrosine 660 the chain carries Phosphotyrosine. An N6-acetyllysine modification is found at lysine 679. Serine 756 is subject to Phosphoserine. Position 773 is an N6-methyllysine (lysine 773). Residues 779–840 (CSPIISKPKP…DKKLPEMDID (62 aa)) are disordered. Basic and acidic residues-rich tracts occupy residues 788–799 (PKVEPPKEEQKN) and 829–840 (DSDKKLPEMDID).

The protein belongs to the heat shock protein 70 family. Interacts with TJP1/ZO-1.

It localises to the cytoplasm. This is Heat shock 70 kDa protein 4 (HSPA4) from Homo sapiens (Human).